Consider the following 835-residue polypeptide: Transcription intermediary factor 1-beta (835 aa).

Low complexity predominate over residues 14 to 24 (AATAASAASGS). Residues 14 to 57 (AATAASAASGSPGSGEGSAGGEKRPAASSAAAASASASSPAGGG) are disordered. 3 positions are modified to phosphoserine: Ser-24, Ser-27, and Ser-31. Lys-36 participates in a covalent cross-link: Glycyl lysine isopeptide (Lys-Gly) (interchain with G-Cter in SUMO2). Over residues 39-53 (AASSAAAASASASSP) the composition is skewed to low complexity. Position 52 is a phosphoserine (Ser-52). The segment at 67-123 (CGVCRERLRPERDPRLLPCLHSACSACLGPATPAAANNSGDGGSAGDGAMVDCPVCK) adopts an RING-type zinc-finger fold. Residue Lys-129 forms a Glycyl lysine isopeptide (Lys-Gly) (interchain with G-Cter in SUMO2) linkage. Phosphoserine is present on Ser-140. The B box-type 1; atypical zinc-finger motif lies at 150–197 (DANQCCTSCEDNAPATSYCVECSEPLCETCVEAHQRVKYTKDHTVRST). Zn(2+)-binding residues include Cys-155, Cys-158, Cys-179, and His-183. A Glycyl lysine isopeptide (Lys-Gly) (interchain with G-Cter in SUMO2) cross-link involves residue Lys-201. The B box-type 2 zinc finger occupies 206-247 (ERTVYCNVHKHEPLVLFCESCDTLTCRDCQLNAHKDHQYQFL). Zn(2+)-binding residues include Cys-211, His-214, Cys-234, and His-239. A leucine zipper alpha helical coiled-coil region region spans residues 248–378 (EDAVRNQRKL…LIYFQLHRAL (131 aa)). The segment at 249-378 (DAVRNQRKLL…LIYFQLHRAL (130 aa)) is interaction with MAGEC2. Residues Lys-256 and Lys-263 each participate in a glycyl lysine isopeptide (Lys-Gly) (interchain with G-Cter in SUMO2) cross-link. Lys-268 carries the N6-acetyllysine modification. Lys-274 participates in a covalent cross-link: Glycyl lysine isopeptide (Lys-Gly) (interchain with G-Cter in SUMO2). Position 306 is an N6-acetyllysine; alternate (Lys-306). Lys-306 participates in a covalent cross-link: Glycyl lysine isopeptide (Lys-Gly) (interchain with G-Cter in SUMO2); alternate. A Glycyl lysine isopeptide (Lys-Gly) (interchain with G-Cter in SUMO2) cross-link involves residue Lys-321. Position 342 is an N6-acetyllysine (Lys-342). Lys-368 is covalently cross-linked (Glycyl lysine isopeptide (Lys-Gly) (interchain with G-Cter in SUMO2)). Residues 368-372 (KLIYF) form an involved in binding PPP1CA region. Lys-379 carries the N6-acetyllysine; alternate modification. Residue Lys-379 forms a Glycyl lysine isopeptide (Lys-Gly) (interchain with G-Cter in SUMO2); alternate linkage. Residue Lys-379 forms a Glycyl lysine isopeptide (Lys-Gly) (interchain with G-Cter in SUMO1); alternate linkage. Lys-409 participates in a covalent cross-link: Glycyl lysine isopeptide (Lys-Gly) (interchain with G-Cter in SUMO2). The interval 413–481 (ERPGTNSTGP…SRSGEGEVSG (69 aa)) is disordered. The residue at position 419 (Ser-419) is a Phosphoserine. A Glycyl lysine isopeptide (Lys-Gly) (interchain with G-Cter in SUMO2) cross-link involves residue Lys-436. Over residues 436 to 445 (KQGSGSSQPM) the composition is skewed to polar residues. Phosphoserine occurs at positions 439 and 441. Lys-470 participates in a covalent cross-link: Glycyl lysine isopeptide (Lys-Gly) (interchain with G-Cter in SUMO2); alternate. A Glycyl lysine isopeptide (Lys-Gly) (interchain with G-Cter in SUMO1); alternate cross-link involves residue Lys-470. Residue Arg-471 is modified to Citrulline. Position 472 is a phosphoserine (Ser-472). At Arg-473 the chain carries Citrulline. Ser-474, Ser-480, and Ser-490 each carry phosphoserine. The tract at residues 477–514 (GEVSGLMRKVPRVSLERLDLDLTSDSQPPVFKVFPGST) is HP1 box. The short motif at 482 to 495 (LMRKVPRVSLERLD) is the PxVxL motif element. Thr-499 is modified (phosphothreonine). Ser-502 is subject to Phosphoserine. A Glycyl lysine isopeptide (Lys-Gly) (interchain with G-Cter in SUMO2) cross-link involves residue Lys-508. Lys-555 participates in a covalent cross-link: Glycyl lysine isopeptide (Lys-Gly) (interchain with G-Cter in SUMO2); alternate. A Glycyl lysine isopeptide (Lys-Gly) (interchain with G-Cter in SUMO); alternate cross-link involves residue Lys-555. A Glycyl lysine isopeptide (Lys-Gly) (interchain with G-Cter in SUMO2) cross-link involves residue Lys-576. Position 595 is a phosphoserine (Ser-595). The PHD-type zinc finger occupies 626 to 673 (ATICRVCQKPGDLVMCNQCEFCFHLDCHLPSLQDVPGEEWSCSLCHVL). Lys-677 participates in a covalent cross-link: Glycyl lysine isopeptide (Lys-Gly) (interchain with G-Cter in SUMO). 3 positions are modified to phosphoserine: Ser-684, Ser-690, and Ser-698. In terms of domain architecture, Bromo spans 696-800 (KLSPANQRKC…RFFETRMNDA (105 aa)). A Glycyl lysine isopeptide (Lys-Gly) (interchain with G-Cter in SUMO2); alternate cross-link involves residue Lys-751. Lys-751 is covalently cross-linked (Glycyl lysine isopeptide (Lys-Gly) (interchain with G-Cter in SUMO1); alternate). Lys-751 participates in a covalent cross-link: Glycyl lysine isopeptide (Lys-Gly) (interchain with G-Cter in SUMO); alternate. At Ser-753 the chain carries Phosphoserine. Residue Tyr-756 is modified to Phosphotyrosine. A Phosphoserine modification is found at Ser-758. 3 positions are modified to N6-acetyllysine; alternate: Lys-771, Lys-775, and Lys-780. Residues Lys-771, Lys-775, and Lys-780 each participate in a glycyl lysine isopeptide (Lys-Gly) (interchain with G-Cter in SUMO2); alternate cross-link. Lys-780 is covalently cross-linked (Glycyl lysine isopeptide (Lys-Gly) (interchain with G-Cter in SUMO1); alternate). A Phosphoserine modification is found at Ser-785. Lys-805 participates in a covalent cross-link: Glycyl lysine isopeptide (Lys-Gly) (interchain with G-Cter in SUMO2). Position 825 is a phosphoserine; by ATM and ATR and dsDNA kinase (Ser-825).

The protein belongs to the TRIM/RBCC family. In terms of assembly, interacts with ZNF382. Interacts with SETX. Oligomer; the RBCC domain homotrimerizes and interacts with one molecule of KRAB to form the KRAB-KAP1 corepressor complex. Binding to a KRAB domain is an absolute requirement for silencing gene expression. Interacts with CEBPB and NR3C1. Interacts with a number of KRAB-ZFP proteins including ZNF10, ZFP53, ZFP68 and ZNF256. Interacts with NCOR1, NR3C1 and CHD3. Interacts with CEBPB (via the RING-type and PHD-type zinc fingers). Component of a ternary complex that includes TRIM28, a HP1 protein (CBX1, CBX3 OR CBX5), a KRAB domain-containing protein, and DNA. Interacts with CBX5 (via the PxVxL motif); the interaction occurs in interphase nuclei and competes for binding POGZ. Interacts with POGZ; the interaction competes for interaction with CBX5. Interacts with SETDB1; the interaction is enhanced by KAP1 sumoylation, stimulates SETDB1 histone methyltransferase activity and gene silencing. Interacts (via the PHD-type zinc finger) with UBE2I; the interaction is required for sumoylation and repressor activity. Component of the TRIM28/KAP1-ERBB4-MDM2 complex involved in connecting growth factor and DNA damage responses. Interacts directly with ERBB4; the interaction represses ERBB4-mediated transcription activity. Interacts with MDM2; the interaction contributes to p53/TP53 inactivation. Component of the TRIM28/KAP1-MDM2-p53/TP53; involved in regulating p53/TP53 stabilization and activity. Interacts (via the leucine zipper alpha helical coiled-coil) with E2F1 (central region); the interaction inhibits E2F1 acetylation and transcriptional activity. Interacts with PPP1CA; the interaction dephosphorylates TRIM28 at Ser-824 and forms a complex at the p21 promoter site. Interacts with PPP1CB; the interaction is weak but is increased on dephosphorylation at Ser-824. Interacts with SMARCAD1. Interacts with, and sumoylates IRF7. Interacts with MAGEC2. Part of a complex composed of TRIM28, HDAC1, HDAC2 and EHMT2. Interacts with AICDA. The large PER complex involved in the histone methylation is composed of at least PER2, CBX3, TRIM28, SUV39H1 and/or SUV39H2; CBX3 mediates the formation of the complex. Interacts with NR4A3; the interactions potentiates NR4A3 activity on NurRE promoter. Interacts (unphosphorylated or phosphorylated form) with ZBTB1 (via BTB domain). Probably part of a corepressor complex containing ZNF304, TRIM28, SETDB1 and DNMT1. Interacts with ATRX. Forms a complex with ATRX, SETDB1 and ZNF274. Interacts with ZFP568; the interaction mediates ZFP568 transcriptional repression activity. Interacts with RRP1B. Interacts with CRY1. Interacts with ZNF263; recruited to the SIX3 promoter along with other proteins involved in chromatin modification and transcriptional corepression where it contributes to transcriptional repression. Interacts with CYREN (via XLF motif). Interacts with TRIM17; this interaction prevents TRIM28 activity. Interacts with ZNF746. Interacts with PHF13. Interacts with ZNF354C. Interacts with ZNF432; the interaction is independent of PARP1. In terms of processing, ATM-induced phosphorylation on Ser-825 represses sumoylation leading to the de-repression of expression of a subset of genes involved in cell cycle control and apoptosis in response to genotoxic stress. Dephosphorylation by the phosphatases, PPP1CA and PP1CB forms, allows sumoylation and expression of TRIM28 target genes. Sumoylation/desumoylation events regulate TRIM28-mediated transcriptional repression. Sumoylation is required for interaction with CHD3 and SETDB1 and the corepressor activity. Represses and is repressed by Ser-824 phosphorylation. Enhances the TRIM28 corepressor activity, inhibiting transcriptional activity of a number of genes including GADD45A and CDKN1A/p21. Lys-555, Lys-780 and Lys-805 are the major sites of sumoylation. In response to Dox-induced DNA damage, enhanced phosphorylation on Ser-825 prevents sumoylation and allows de-repression of CDKN1A/p21. Post-translationally, auto-ubiquitinated; enhanced by MAGEA2 and MAGEC2. In terms of processing, citrullinated by PADI4. ADP-ribosylated by SIRT6, promoting TRIM28/KAP1 interaction with CBX5, thereby contributing to the packaging of LINE-1 retrotransposon elements into transcriptionally repressive heterochromatin.

The protein resides in the nucleus. The enzyme catalyses S-ubiquitinyl-[E2 ubiquitin-conjugating enzyme]-L-cysteine + [acceptor protein]-L-lysine = [E2 ubiquitin-conjugating enzyme]-L-cysteine + N(6)-ubiquitinyl-[acceptor protein]-L-lysine.. Its pathway is protein modification; protein sumoylation. In terms of biological role, nuclear corepressor for KRAB domain-containing zinc finger proteins (KRAB-ZFPs). Mediates gene silencing by recruiting CHD3, a subunit of the nucleosome remodeling and deacetylation (NuRD) complex, and SETDB1 (which specifically methylates histone H3 at 'Lys-9' (H3K9me)) to the promoter regions of KRAB target genes. Enhances transcriptional repression by coordinating the increase in H3K9me, the decrease in histone H3 'Lys-9 and 'Lys-14' acetylation (H3K9ac and H3K14ac, respectively) and the disposition of HP1 proteins to silence gene expression. Recruitment of SETDB1 induces heterochromatinization. May play a role as a coactivator for CEBPB and NR3C1 in the transcriptional activation of ORM1. Also a corepressor for ERBB4. Inhibits E2F1 activity by stimulating E2F1-HDAC1 complex formation and inhibiting E2F1 acetylation. May serve as a partial backup to prevent E2F1-mediated apoptosis in the absence of RB1. Important regulator of CDKN1A/p21(CIP1). Has E3 SUMO-protein ligase activity toward itself via its PHD-type zinc finger. Also specifically sumoylates IRF7, thereby inhibiting its transactivation activity. Ubiquitinates p53/TP53 leading to its proteasomal degradation; the function is enhanced by MAGEC2 and MAGEA2, and possibly MAGEA3 and MAGEA6. Mediates the nuclear localization of KOX1, ZNF268 and ZNF300 transcription factors. In association with isoform 2 of ZFP90, is required for the transcriptional repressor activity of FOXP3 and the suppressive function of regulatory T-cells (Treg). Probably forms a corepressor complex required for activated KRAS-mediated promoter hypermethylation and transcriptional silencing of tumor suppressor genes (TSGs) or other tumor-related genes in colorectal cancer (CRC) cells. Required to maintain a transcriptionally repressive state of genes in undifferentiated embryonic stem cells (ESCs). In ESCs, in collaboration with SETDB1, is also required for H3K9me3 and silencing of endogenous and introduced retroviruses in a DNA-methylation independent-pathway. Associates at promoter regions of tumor suppressor genes (TSGs) leading to their gene silencing. The SETDB1-TRIM28-ZNF274 complex may play a role in recruiting ATRX to the 3'-exons of zinc finger genes with atypical chromatin signatures to establish or maintain/protect H3K9me3 at these transcriptionally active regions. The sequence is that of Transcription intermediary factor 1-beta from Rattus norvegicus (Rat).